Consider the following 229-residue polypeptide: 7-cyano-7-deazaguanine synthase (229 aa).

7-17 (LSGGLDSTTVL) contributes to the ATP binding site. Zn(2+) contacts are provided by cysteine 191, cysteine 204, cysteine 207, and cysteine 210.

The protein belongs to the QueC family. The cofactor is Zn(2+).

It carries out the reaction 7-carboxy-7-deazaguanine + NH4(+) + ATP = 7-cyano-7-deazaguanine + ADP + phosphate + H2O + H(+). The protein operates within purine metabolism; 7-cyano-7-deazaguanine biosynthesis. In terms of biological role, catalyzes the ATP-dependent conversion of 7-carboxy-7-deazaguanine (CDG) to 7-cyano-7-deazaguanine (preQ(0)). This chain is 7-cyano-7-deazaguanine synthase, found in Cyanothece sp. (strain PCC 7425 / ATCC 29141).